The chain runs to 742 residues: Phosphoribosylformylglycinamidine synthase subunit PurL (742 aa).

His-54 is a catalytic residue. Tyr-57 and Lys-96 together coordinate ATP. Glu-98 provides a ligand contact to Mg(2+). Residues 99–102 and Arg-121 each bind substrate; that span reads SHNH. His-100 functions as the Proton acceptor in the catalytic mechanism. Asp-122 contributes to the Mg(2+) binding site. Gln-245 contributes to the substrate binding site. Position 273 (Asp-273) interacts with Mg(2+). 317 to 319 is a binding site for substrate; the sequence is ESQ. 2 residues coordinate ATP: Asp-500 and Gly-537. Residue Asn-538 coordinates Mg(2+). Ser-540 lines the substrate pocket.

It belongs to the FGAMS family. As to quaternary structure, monomer. Part of the FGAM synthase complex composed of 1 PurL, 1 PurQ and 2 PurS subunits.

It localises to the cytoplasm. It carries out the reaction N(2)-formyl-N(1)-(5-phospho-beta-D-ribosyl)glycinamide + L-glutamine + ATP + H2O = 2-formamido-N(1)-(5-O-phospho-beta-D-ribosyl)acetamidine + L-glutamate + ADP + phosphate + H(+). It functions in the pathway purine metabolism; IMP biosynthesis via de novo pathway; 5-amino-1-(5-phospho-D-ribosyl)imidazole from N(2)-formyl-N(1)-(5-phospho-D-ribosyl)glycinamide: step 1/2. Part of the phosphoribosylformylglycinamidine synthase complex involved in the purines biosynthetic pathway. Catalyzes the ATP-dependent conversion of formylglycinamide ribonucleotide (FGAR) and glutamine to yield formylglycinamidine ribonucleotide (FGAM) and glutamate. The FGAM synthase complex is composed of three subunits. PurQ produces an ammonia molecule by converting glutamine to glutamate. PurL transfers the ammonia molecule to FGAR to form FGAM in an ATP-dependent manner. PurS interacts with PurQ and PurL and is thought to assist in the transfer of the ammonia molecule from PurQ to PurL. In Geobacillus thermodenitrificans (strain NG80-2), this protein is Phosphoribosylformylglycinamidine synthase subunit PurL.